Here is a 364-residue protein sequence, read N- to C-terminus: Probable dual-specificity RNA methyltransferase RlmN (364 aa).

Glu107 functions as the Proton acceptor in the catalytic mechanism. The region spanning His113–Asp346 is the Radical SAM core domain. A disulfide bridge links Cys120 with Cys351. Residues Cys127, Cys131, and Cys134 each contribute to the [4Fe-4S] cluster site. S-adenosyl-L-methionine-binding positions include Gly177–Glu178, Ser209, Ser232–His234, and Asn308. Cys351 functions as the S-methylcysteine intermediate in the catalytic mechanism.

This sequence belongs to the radical SAM superfamily. RlmN family. [4Fe-4S] cluster is required as a cofactor.

The protein localises to the cytoplasm. It catalyses the reaction adenosine(2503) in 23S rRNA + 2 reduced [2Fe-2S]-[ferredoxin] + 2 S-adenosyl-L-methionine = 2-methyladenosine(2503) in 23S rRNA + 5'-deoxyadenosine + L-methionine + 2 oxidized [2Fe-2S]-[ferredoxin] + S-adenosyl-L-homocysteine. The catalysed reaction is adenosine(37) in tRNA + 2 reduced [2Fe-2S]-[ferredoxin] + 2 S-adenosyl-L-methionine = 2-methyladenosine(37) in tRNA + 5'-deoxyadenosine + L-methionine + 2 oxidized [2Fe-2S]-[ferredoxin] + S-adenosyl-L-homocysteine. In terms of biological role, specifically methylates position 2 of adenine 2503 in 23S rRNA and position 2 of adenine 37 in tRNAs. Confers resistance to some classes of antibiotics. The protein is Probable dual-specificity RNA methyltransferase RlmN of Staphylococcus aureus (strain Mu3 / ATCC 700698).